A 150-amino-acid polypeptide reads, in one-letter code: Transcriptional regulator MraZ (150 aa).

SpoVT-AbrB domains are found at residues 8–55 (FINN…GISH) and 84–127 (AVQL…QPQN).

It belongs to the MraZ family. In terms of assembly, forms oligomers.

It localises to the cytoplasm. The protein resides in the nucleoid. This Rickettsia bellii (strain OSU 85-389) protein is Transcriptional regulator MraZ.